A 2792-amino-acid chain; its full sequence is E3 ubiquitin-protein ligase UBR5 (2792 aa).

Residue threonine 2 is modified to N-acetylthreonine. Over residues 77 to 88 (DRLELGKPDNND) the composition is skewed to basic and acidic residues. The segment at 77–175 (DRLELGKPDN…DRGSGLLGSQ (99 aa)) is disordered. Residues 94 to 111 (SSSGTGRTSRPGRTSDSP) show a composition bias toward low complexity. Position 110 is a phosphoserine (serine 110). A compositionally biased stretch (gly residues) spans 135–144 (GVGGSGGGSS). The UBA domain occupies 184–226 (VIPEELISQAQVVLQGKSRSVIIRELQRTNLDVNLAVNNLLSR). Position 321 is a phosphoserine (serine 321). Residues 322–341 (FDNERGSTSKEGESNPDKKN) are compositionally biased toward basic and acidic residues. The tract at residues 322–347 (FDNERGSTSKEGESNPDKKNTPVQSP) is disordered. 2 positions are modified to phosphoserine: serine 346 and serine 572. Positions 577–598 (KSMEKASKTLETKPESKQEPVK) are enriched in basic and acidic residues. Positions 577–642 (KSMEKASKTL…APREEEKVNE (66 aa)) are disordered. The residue at position 606 (serine 606) is a Phosphoserine. Residues 608 to 622 (ASTCSDASSIASSAS) are compositionally biased toward low complexity. Threonine 631 carries the phosphothreonine modification. Phosphoserine is present on residues serine 802, serine 922, and serine 1012. Disordered stretches follow at residues 993–1029 (AGLG…SMDP) and 1046–1069 (TAAT…EPSV). Pro residues predominate over residues 1011–1027 (VSPPIAPPSWVPDPPSM). Over residues 1046 to 1067 (TAATGSGQGPSTSTIPGPSTEP) the composition is skewed to polar residues. Phosphothreonine occurs at positions 1109 and 1129. Residues 1171–1239 (DTCSFTWTGA…EKCKCKTLIA (69 aa)) form a UBR-type zinc finger. 5 positions are modified to phosphoserine: serine 1221, serine 1302, serine 1349, serine 1369, and serine 1475. Positions 1293–1312 (REDRNRKTASPEDSDMPDHD) are disordered. The segment at 1509-1734 (SVEPLPPRPS…PSSTSTPAAS (226 aa)) is disordered. The span at 1518–1531 (SSDQASSSSQSQSS) shows a compositional bias: low complexity. The segment covering 1532 to 1547 (YIIRNPQQRRISQSQP) has biased composition (polar residues). Residue serine 1543 is modified to Phosphoserine. 2 stretches are compositionally biased toward acidic residues: residues 1553 to 1568 (EEQD…EVEV) and 1599 to 1608 (HDEDGSDMEL). Over residues 1623 to 1632 (NHSNQDNASG) the composition is skewed to polar residues. Low complexity-rich tracts occupy residues 1635-1651 (SVVT…ASSV), 1662-1675 (SNDS…SSQS), and 1720-1734 (AAST…PAAS). Phosphothreonine is present on threonine 1730. Serine 1735 carries the phosphoserine modification. Residue tyrosine 1740 is modified to Phosphotyrosine. Residue serine 1774 is modified to Phosphoserine. The interval 1853–1884 (LASAGDPGHPNHPLHASQNSARRERMTAREEA) is disordered. The span at 1873 to 1884 (ARRERMTAREEA) shows a compositional bias: basic and acidic residues. At threonine 1963 the chain carries Phosphothreonine. The tract at residues 1978–2015 (GIDNEDSEHENDDDTSQSATLNDKDDDSLPAETGQNHP) is disordered. A compositionally biased stretch (acidic residues) spans 1979–1992 (IDNEDSEHENDDDT). 3 positions are modified to phosphoserine: serine 1984, serine 2020, and serine 2022. Threonine 2024 is modified (phosphothreonine). Serine 2070 carries the post-translational modification Phosphoserine. The disordered stretch occupies residues 2111 to 2137 (RQKKEGEEQSLLAEEADSSKPGPSAPD). A Phosphothreonine modification is found at threonine 2207. Residues serine 2235 and serine 2283 each carry the phosphoserine modification. The tract at residues 2317–2387 (HTSLMQRLRN…SDDPDPLPAH (71 aa)) is disordered. Basic and acidic residues-rich tracts occupy residues 2326–2342 (NRGE…EMRR) and 2350–2362 (SRRD…RRQL). A PABC domain is found at 2371–2448 (PASEGNPSDD…AMELIIAHGR (78 aa)). One can recognise an HECT domain in the interval 2455–2792 (ILDLGLLDSS…AIKTKNFGFV (338 aa)). Residues serine 2463, serine 2477, and serine 2479 each carry the phosphoserine modification. Residues 2467-2494 (VQENRKRHGSSRSVVDMDLEDTDDGDDN) are disordered. Acidic residues predominate over residues 2483–2493 (MDLEDTDDGDD). Cysteine 2761 (glycyl thioester intermediate) is an active-site residue.

Belongs to the UBR5 family. As to quaternary structure, homotetramer; composed of a dimer of dimers. Associates with CDK9 and TFIIS/TCEA1 and forms a transcription regulatory complex made of CDK9, RNAP II, UBR5 and TFIIS/TCEA1 that can stimulate target gene transcription (e.g. gamma fibrinogen/FGG) by recruiting their promoters. Associates with the E3 ligase complex containing DYRK2, EDD/UBR5, DDB1 and DCAF1 proteins (EDVP complex). Binds TOPBP1. Interacts with PIH1D1. Interacts with CIB1.

It localises to the nucleus. It is found in the cytoplasm. The catalysed reaction is S-ubiquitinyl-[E2 ubiquitin-conjugating enzyme]-L-cysteine + [acceptor protein]-L-lysine = [E2 ubiquitin-conjugating enzyme]-L-cysteine + N(6)-ubiquitinyl-[acceptor protein]-L-lysine.. Its pathway is protein modification; protein ubiquitination. In terms of biological role, E3 ubiquitin-protein ligase involved in different protein quality control pathways in the cytoplasm and nucleus. Mainly acts as a ubiquitin chain elongator that extends pre-ubiquitinated substrates. Component of the N-end rule pathway: ubiquitinates proteins bearing specific N-terminal residues that are destabilizing according to the N-end rule, leading to their degradation. Recognizes type-1 N-degrons, containing positively charged amino acids (Arg, Lys and His). Together with UBR4, part of a cytoplasm protein quality control pathway that prevents protein aggregation by catalyzing assembly of heterotypic 'Lys-11'-/'Lys-48'-linked branched ubiquitin chains on aggregated proteins, leading to substrate recognition by the segregase p97/VCP and degradation by the proteasome: UBR5 is probably branching multiple 'Lys-48'-linked chains of substrates initially modified with mixed conjugates by UBR4. Together with ITCH, catalyzes 'Lys-48'-/'Lys-63'-branched ubiquitination of TXNIP, leading to its degradation: UBR5 mediates branching of 'Lys-48'-linked chains of substrates initially modified with 'Lys-63'-linked conjugates by ITCH. Catalytic component of a nuclear protein quality control pathway that mediates ubiquitination and degradation of unpaired transcription factors (i.e. transcription factors that are not assembled into functional multiprotein complexes): specifically recognizes and binds degrons that are not accessible when transcription regulators are associated with their coactivators. Ubiquitinates various unpaired transcription regulator (MYC, SUPT4H1, SUPT5H, CDC20 and MCRS1), as well as ligand-bound nuclear receptors (ESR1, NR1H3, NR3C1, PGR, RARA, RXRA AND VDR) that are not associated with their nuclear receptor coactivators (NCOAs). Involved in maturation and/or transcriptional regulation of mRNA by mediating polyubiquitination and activation of CDK9. Also acts as a regulator of DNA damage response by acting as a suppressor of RNF168, an E3 ubiquitin-protein ligase that promotes accumulation of 'Lys-63'-linked histone H2A and H2AX at DNA damage sites, thereby acting as a guard against excessive spreading of ubiquitinated chromatin at damaged chromosomes. Regulates DNA topoisomerase II binding protein (TopBP1) in the DNA damage response. Ubiquitinates acetylated PCK1. Acts as a positive regulator of the canonical Wnt signaling pathway by mediating (1) ubiquitination and stabilization of CTNNB1, and (2) 'Lys-48'-linked ubiquitination and degradation of TLE3. Promotes disassembly of the mitotic checkpoint complex (MCC) from the APC/C complex by catalyzing ubiquitination of BUB1B, BUB3 and CDC20. Plays an essential role in extraembryonic development. Required for the maintenance of skeletal tissue homeostasis by acting as an inhibitor of hedgehog (HH) signaling. This chain is E3 ubiquitin-protein ligase UBR5, found in Mus musculus (Mouse).